Consider the following 347-residue polypeptide: Probable arabinogalactan endo-beta-1,4-galactanase A (347 aa).

The N-terminal stretch at 1-16 is a signal peptide; it reads MLFSYLLATLPLLANA. E150 functions as the Proton donor in the catalytic mechanism. The active-site Nucleophile is E260.

Belongs to the glycosyl hydrolase 53 family.

It localises to the secreted. The enzyme catalyses The enzyme specifically hydrolyzes (1-&gt;4)-beta-D-galactosidic linkages in type I arabinogalactans.. Functionally, endogalactanase involved in the degradation of plant cell wall polysaccharides, and more particularly of hairy regions of pectin. The sequence is that of Probable arabinogalactan endo-beta-1,4-galactanase A (galA) from Aspergillus oryzae (strain ATCC 42149 / RIB 40) (Yellow koji mold).